The primary structure comprises 185 residues: ATP-dependent protease subunit HslV (185 aa).

Residue T12 is part of the active site. Residues A168, C171, and T174 each coordinate Na(+).

This sequence belongs to the peptidase T1B family. HslV subfamily. In terms of assembly, a double ring-shaped homohexamer of HslV is capped on each side by a ring-shaped HslU homohexamer. The assembly of the HslU/HslV complex is dependent on binding of ATP.

It localises to the cytoplasm. It catalyses the reaction ATP-dependent cleavage of peptide bonds with broad specificity.. Allosterically activated by HslU binding. In terms of biological role, protease subunit of a proteasome-like degradation complex believed to be a general protein degrading machinery. The sequence is that of ATP-dependent protease subunit HslV from Dinoroseobacter shibae (strain DSM 16493 / NCIMB 14021 / DFL 12).